The sequence spans 144 residues: Flagellar assembly factor FliW (144 aa).

The protein belongs to the FliW family. As to quaternary structure, interacts with translational regulator CsrA and flagellin(s).

The protein localises to the cytoplasm. Acts as an anti-CsrA protein, binds CsrA and prevents it from repressing translation of its target genes, one of which is flagellin. Binds to flagellin and participates in the assembly of the flagellum. The polypeptide is Flagellar assembly factor FliW (Geobacillus kaustophilus (strain HTA426)).